Reading from the N-terminus, the 508-residue chain is Maturase K (508 aa).

This sequence belongs to the intron maturase 2 family. MatK subfamily.

It is found in the plastid. The protein localises to the chloroplast. Its function is as follows. Usually encoded in the trnK tRNA gene intron. Probably assists in splicing its own and other chloroplast group II introns. This is Maturase K from Pelargonium hortorum (Common geranium).